A 282-amino-acid chain; its full sequence is Biotin synthase (282 aa).

The Radical SAM core domain occupies 1–228 (MQEIFLCSIS…NARLMAAGGR (228 aa)). 3 residues coordinate [4Fe-4S] cluster: C17, C21, and C24. [2Fe-2S] cluster-binding residues include C61, C96, C154, and R221.

Belongs to the radical SAM superfamily. Biotin synthase family. As to quaternary structure, homodimer. [4Fe-4S] cluster is required as a cofactor. Requires [2Fe-2S] cluster as cofactor.

The enzyme catalyses (4R,5S)-dethiobiotin + (sulfur carrier)-SH + 2 reduced [2Fe-2S]-[ferredoxin] + 2 S-adenosyl-L-methionine = (sulfur carrier)-H + biotin + 2 5'-deoxyadenosine + 2 L-methionine + 2 oxidized [2Fe-2S]-[ferredoxin]. Its pathway is cofactor biosynthesis; biotin biosynthesis; biotin from 7,8-diaminononanoate: step 2/2. Its function is as follows. Catalyzes the conversion of dethiobiotin (DTB) to biotin by the insertion of a sulfur atom into dethiobiotin via a radical-based mechanism. This is Biotin synthase from Helicobacter acinonychis (strain Sheeba).